A 236-amino-acid polypeptide reads, in one-letter code: 2,3,4,5-tetrahydropyridine-2,6-dicarboxylate N-acetyltransferase (236 aa).

It belongs to the transferase hexapeptide repeat family. DapH subfamily.

It carries out the reaction (S)-2,3,4,5-tetrahydrodipicolinate + acetyl-CoA + H2O = L-2-acetamido-6-oxoheptanedioate + CoA. The protein operates within amino-acid biosynthesis; L-lysine biosynthesis via DAP pathway; LL-2,6-diaminopimelate from (S)-tetrahydrodipicolinate (acetylase route): step 1/3. Functionally, catalyzes the transfer of an acetyl group from acetyl-CoA to tetrahydrodipicolinate. This chain is 2,3,4,5-tetrahydropyridine-2,6-dicarboxylate N-acetyltransferase, found in Listeria ivanovii.